Consider the following 82-residue polypeptide: Photosystem I iron-sulfur center (82 aa).

2 consecutive 4Fe-4S ferredoxin-type domains span residues 2 to 31 and 37 to 68; these read SHTV…MVPW and GQIA…VRVY. Positions 11, 14, 17, 21, 48, 51, 54, and 58 each coordinate [4Fe-4S] cluster.

As to quaternary structure, the eukaryotic PSI reaction center is composed of at least 11 subunits. The cofactor is [4Fe-4S] cluster.

Its subcellular location is the plastid. It is found in the chloroplast thylakoid membrane. The catalysed reaction is reduced [plastocyanin] + hnu + oxidized [2Fe-2S]-[ferredoxin] = oxidized [plastocyanin] + reduced [2Fe-2S]-[ferredoxin]. In terms of biological role, apoprotein for the two 4Fe-4S centers FA and FB of photosystem I (PSI); essential for photochemical activity. FB is the terminal electron acceptor of PSI, donating electrons to ferredoxin. The C-terminus interacts with PsaA/B/D and helps assemble the protein into the PSI complex. Required for binding of PsaD and PsaE to PSI. PSI is a plastocyanin/cytochrome c6-ferredoxin oxidoreductase, converting photonic excitation into a charge separation, which transfers an electron from the donor P700 chlorophyll pair to the spectroscopically characterized acceptors A0, A1, FX, FA and FB in turn. This is Photosystem I iron-sulfur center from Trieres chinensis (Marine centric diatom).